The following is a 338-amino-acid chain: Malate dehydrogenase, mitochondrial (338 aa).

A mitochondrion-targeting transit peptide spans 1 to 24 (MLSALARPAGAALRRSFSTSAQNN). NAD(+)-binding positions include 31-37 (GASGGIG) and Asp-57. Ser-33 carries O-linked (GlcNAc) serine glycosylation. Residues Lys-78 and Lys-91 each carry the N6-acetyllysine; alternate modification. Residues Lys-78 and Lys-91 each carry the N6-succinyllysine; alternate modification. Substrate-binding residues include Arg-104 and Arg-110. Residues Asn-117 and 140–142 (ISN) contribute to the NAD(+) site. Residue Asn-142 coordinates substrate. Lys-165 is modified (N6-acetyllysine). Position 176 (Arg-176) interacts with substrate. Position 185 is an N6-acetyllysine; alternate (Lys-185). Lys-185 bears the N6-succinyllysine; alternate mark. Residue His-200 is the Proton acceptor of the active site. N6-succinyllysine is present on Lys-203. N6-acetyllysine; alternate is present on residues Lys-215 and Lys-239. 2 positions are modified to N6-succinyllysine; alternate: Lys-215 and Lys-239. Lys-239 is modified (N6-malonyllysine; alternate). A Phosphoserine modification is found at Ser-246. Met-251 serves as a coordination point for NAD(+). Lys-269 carries the post-translational modification N6-succinyllysine. An N6-acetyllysine; alternate mark is found at Lys-296, Lys-301, Lys-307, Lys-314, and Lys-324. An N6-succinyllysine; alternate mark is found at Lys-296, Lys-301, Lys-307, Lys-314, and Lys-324. Lys-307 carries the N6-malonyllysine; alternate modification. Ser-326 is modified (phosphoserine). Residues Lys-328, Lys-329, and Lys-335 each carry the N6-acetyllysine; alternate modification. An N6-succinyllysine; alternate modification is found at Lys-328. Residue Lys-329 is modified to N6-malonyllysine; alternate. Lys-335 bears the N6-succinyllysine; alternate mark.

Belongs to the LDH/MDH superfamily. MDH type 1 family. Homodimer. In terms of processing, acetylation is enhanced after treatment either with trichostin A (TCA) or with nicotinamide (NAM) with the appearance of tri- and tetraacetylations. Glucose also increases acetylation.

Its subcellular location is the mitochondrion matrix. It carries out the reaction (S)-malate + NAD(+) = oxaloacetate + NADH + H(+). Enzyme activity is enhanced by acetylation. This is Malate dehydrogenase, mitochondrial (MDH2) from Bos taurus (Bovine).